We begin with the raw amino-acid sequence, 41 residues long: Disintegrin obtustatin (41 aa).

Cystine bridges form between Cys1-Cys10, Cys6-Cys29, Cys7-Cys34, and Cys19-Cys36. The Disintegrin domain maps to 1 to 41 (CTTGPCCRQCKLKPAGTTCWKTSLTSHYCTGKSCDCPLYPG). The short motif at 21 to 23 (KTS) is the Cell attachment site; atypical (KTS) element.

The protein belongs to the disintegrin family. Short disintegrin subfamily. As to quaternary structure, monomer. In terms of tissue distribution, expressed by the venom gland.

The protein localises to the secreted. Is a potent and selective inhibitor of alpha-1/beta-1 (ITGA1/ITGB1) integrin. It blocks the adhesion of alpha-1/beta-1-expressing K562 cells to immobilized collagens IV and I with IC(50) of 2 and 0.5 nM, respectively. Potently inhibits angiogenesis in chicken and in mouse model and reduces tumor development by half. Is 25-fold less potent than viperistatin. This Macrovipera lebetina obtusa (Levant blunt-nosed viper) protein is Disintegrin obtustatin.